A 255-amino-acid polypeptide reads, in one-letter code: ATP synthase subunit a (255 aa).

Helical transmembrane passes span 40 to 60 (TEPI…ASEV), 109 to 129 (LIGG…IPGV), 135 to 155 (NLNI…YYGL), 163 to 183 (VAHL…IEVI), 196 to 218 (LMLN…ALFV), and 230 to 250 (IVVQ…LATE).

It belongs to the ATPase A chain family. In terms of assembly, F-type ATPases have 2 components, CF(1) - the catalytic core - and CF(0) - the membrane proton channel. CF(1) has five subunits: alpha(3), beta(3), gamma(1), delta(1), epsilon(1). CF(0) has three main subunits: a(1), b(2) and c(9-12). The alpha and beta chains form an alternating ring which encloses part of the gamma chain. CF(1) is attached to CF(0) by a central stalk formed by the gamma and epsilon chains, while a peripheral stalk is formed by the delta and b chains.

The protein localises to the cell inner membrane. Its function is as follows. Key component of the proton channel; it plays a direct role in the translocation of protons across the membrane. This is ATP synthase subunit a from Sorangium cellulosum (strain So ce56) (Polyangium cellulosum (strain So ce56)).